Consider the following 252-residue polypeptide: Probable endonuclease 4 (252 aa).

The Zn(2+) site is built by histidine 56, histidine 96, glutamate 129, aspartate 162, histidine 165, histidine 191, aspartate 204, histidine 206, and glutamate 233.

It belongs to the AP endonuclease 2 family. It depends on Zn(2+) as a cofactor.

The catalysed reaction is Endonucleolytic cleavage to 5'-phosphooligonucleotide end-products.. In terms of biological role, endonuclease IV plays a role in DNA repair. It cleaves phosphodiester bonds at apurinic or apyrimidinic (AP) sites, generating a 3'-hydroxyl group and a 5'-terminal sugar phosphate. The chain is Probable endonuclease 4 from Mycobacterium tuberculosis (strain ATCC 25177 / H37Ra).